The sequence spans 292 residues: Short chain dehydrogenases/reductase notP' (292 aa).

The tract at residues 1-25 (MPQTSDGNVHAPQYREAKPSQGDPS) is disordered. 7 residues coordinate NADP(+): Leu48, Asp97, Lys158, Tyr193, Lys197, Ile230, and Thr232. Tyr193 serves as the catalytic Proton donor. Lys197 functions as the Lowers pKa of active site Tyr in the catalytic mechanism.

Belongs to the short-chain dehydrogenases/reductases (SDR) family.

Short chain dehydrogenases/reductase; part of the gene cluster that mediates the biosynthesis of notoamide, a fungal indole alkaloid that belongs to a family of natural products containing a characteristic bicyclo[2.2.2]diazaoctane core. The first step of notoamide biosynthesis involves coupling of L-proline and L-tryptophan by the bimodular NRPS notE', to produce cyclo-L-tryptophan-L-proline called brevianamide F. The reverse prenyltransferase notF' then acts as a deoxybrevianamide E synthase and converts brevianamide F to deoxybrevianamide E via reverse prenylation at C-2 of the indole ring leading to the bicyclo[2.2.2]diazaoctane core. Deoxybrevianamide E is further hydroxylated at C-6 of the indole ring, likely catalyzed by the cytochrome P450 monooxygenase notG', to yield 6-hydroxy-deoxybrevianamide E. 6-hydroxy-deoxybrevianamide E is a specific substrate of the prenyltransferase notC' for normal prenylation at C-7 to produce 6-hydroxy-7-prenyl-deoxybrevianamide, also called notoamide S. As the proposed pivotal branching point in notoamide biosynthesis, notoamide S can be diverted to notoamide E through an oxidative pyran ring closure putatively catalyzed by either notH' cytochrome P450 monooxygenase or the notD' FAD-linked oxidoreductase. This step would be followed by an indole 2,3-epoxidation-initiated pinacol-like rearrangement catalyzed by the notB' FAD-dependent monooxygenase leading to the formation of notoamide C and notoamide D. On the other hand notoamide S is converted to notoamide T by notH' (or notD'), a bifunctional oxidase that also functions as the intramolecular Diels-Alderase responsible for generation of (-)-notoamide T. To generate antipodal (+)-notoaminide T, notH (or notD) in Aspergillus strain MF297-2 is expected to catalyze a Diels-Alder reaction leading to the opposite stereochemistry. The remaining oxidoreductase notD' (or notH') likely catalyzes the oxidative pyran ring formation to yield (-)-stephacidin A. The FAD-dependent monooxygenase notI' is highly similar to notB' and is predicted to catalyze a similar conversion from (-)-stephacidin A to (+)-notoamide B via the 2,3-epoxidation of (-)-stephacidin A followed by a pinacol-type rearrangement. Finally, it remains unclear which enzyme could be responsible for the final hydroxylation steps leading to notoamide A and sclerotiamide. The function of notP' in the notoamide biosynthesis has not been determined yet. This is Short chain dehydrogenases/reductase notP' from Aspergillus versicolor.